Here is a 173-residue protein sequence, read N- to C-terminus: MAKVQGKGAAEKENDDGLREKMIAVNRVSKVVKGGRTMSFAALTVVGDGDGRIGMGKGKAREVPVSVQKAMEQARRGMFKVALKNGTLHHTVVGKHGASTVLISPAAEGTGVIAGGPMRAIFEVMGVRNVVAKSLGSSNPYNMVRATLNGLRASLTPSEVAAKRGKTVEEILG.

Residues 18-81 (LREKMIAVNR…EQARRGMFKV (64 aa)) enclose the S5 DRBM domain.

This sequence belongs to the universal ribosomal protein uS5 family. In terms of assembly, part of the 30S ribosomal subunit. Contacts proteins S4 and S8.

With S4 and S12 plays an important role in translational accuracy. Its function is as follows. Located at the back of the 30S subunit body where it stabilizes the conformation of the head with respect to the body. In Bordetella petrii (strain ATCC BAA-461 / DSM 12804 / CCUG 43448), this protein is Small ribosomal subunit protein uS5.